The sequence spans 293 residues: 4-hydroxy-tetrahydrodipicolinate synthase (293 aa).

Residue Thr-45 coordinates pyruvate. Tyr-133 functions as the Proton donor/acceptor in the catalytic mechanism. Lys-162 (schiff-base intermediate with substrate) is an active-site residue. Position 204 (Ile-204) interacts with pyruvate.

It belongs to the DapA family. In terms of assembly, homotetramer; dimer of dimers.

The protein localises to the cytoplasm. The enzyme catalyses L-aspartate 4-semialdehyde + pyruvate = (2S,4S)-4-hydroxy-2,3,4,5-tetrahydrodipicolinate + H2O + H(+). Its pathway is amino-acid biosynthesis; L-lysine biosynthesis via DAP pathway; (S)-tetrahydrodipicolinate from L-aspartate: step 3/4. Its function is as follows. Catalyzes the condensation of (S)-aspartate-beta-semialdehyde [(S)-ASA] and pyruvate to 4-hydroxy-tetrahydrodipicolinate (HTPA). The chain is 4-hydroxy-tetrahydrodipicolinate synthase from Brucella abortus biovar 1 (strain 9-941).